Here is a 377-residue protein sequence, read N- to C-terminus: Cobalt-precorrin-5B C(1)-methyltransferase (377 aa).

The interval 1-21 (MNPVRQPYDLAAPAPNGMRRG) is disordered.

Belongs to the CbiD family.

The catalysed reaction is Co-precorrin-5B + S-adenosyl-L-methionine = Co-precorrin-6A + S-adenosyl-L-homocysteine. Its pathway is cofactor biosynthesis; adenosylcobalamin biosynthesis; cob(II)yrinate a,c-diamide from sirohydrochlorin (anaerobic route): step 6/10. Its function is as follows. Catalyzes the methylation of C-1 in cobalt-precorrin-5B to form cobalt-precorrin-6A. The protein is Cobalt-precorrin-5B C(1)-methyltransferase of Chromobacterium violaceum (strain ATCC 12472 / DSM 30191 / JCM 1249 / CCUG 213 / NBRC 12614 / NCIMB 9131 / NCTC 9757 / MK).